The primary structure comprises 141 residues: Hemoglobin subunit alpha (141 aa).

The Globin domain occupies 1–141 (VLSATDKANV…VATVLTSKYR (141 aa)). Phosphoserine is present on serine 3. An N6-succinyllysine mark is found at lysine 7 and lysine 11. Lysine 16 bears the N6-acetyllysine; alternate mark. N6-succinyllysine; alternate is present on lysine 16. At tyrosine 24 the chain carries Phosphotyrosine. Lysine 40 is modified (N6-succinyllysine). Position 58 (histidine 58) interacts with O2. Histidine 87 serves as a coordination point for heme b. Serine 102 carries the phosphoserine modification. The residue at position 108 (threonine 108) is a Phosphothreonine. Position 124 is a phosphoserine (serine 124). Phosphothreonine occurs at positions 134 and 137. Serine 138 carries the phosphoserine modification.

Belongs to the globin family. In terms of assembly, heterotetramer of two alpha chains and two beta chains. In terms of tissue distribution, red blood cells.

Its function is as follows. Involved in oxygen transport from the lung to the various peripheral tissues. In terms of biological role, hemopressin acts as an antagonist peptide of the cannabinoid receptor CNR1. Hemopressin-binding efficiently blocks cannabinoid receptor CNR1 and subsequent signaling. This chain is Hemoglobin subunit alpha (HBA), found in Erinaceus europaeus (Western European hedgehog).